Reading from the N-terminus, the 248-residue chain is Ribonuclease HII (248 aa).

Positions 29 to 219 (DIVCGVDEAG…VREAHLRLGT (191 aa)) constitute an RNase H type-2 domain. A divalent metal cation is bound by residues Asp-35, Glu-36, and Asp-128.

The protein belongs to the RNase HII family. The cofactor is Mn(2+). Mg(2+) serves as cofactor.

Its subcellular location is the cytoplasm. The catalysed reaction is Endonucleolytic cleavage to 5'-phosphomonoester.. Its function is as follows. Endonuclease that specifically degrades the RNA of RNA-DNA hybrids. The sequence is that of Ribonuclease HII from Paraburkholderia xenovorans (strain LB400).